The sequence spans 301 residues: Thyrotroph embryonic factor (301 aa).

2 disordered regions span residues 1 to 70 (MSDA…ASTM) and 130 to 174 (ESAS…DPSC). Residue Ser30 is modified to Phosphoserine. Positions 39 to 59 (KLMENPPRETRLDKEKGKEKL) are enriched in basic and acidic residues. Residues 131–158 (SASSSTASPPSSSTAIFQPSETVSSTES) show a composition bias toward low complexity. In terms of domain architecture, bZIP spans 231-294 (DEKYWTRRKK…GKCKTIVSKY (64 aa)). The segment at 233–253 (KYWTRRKKNNVAAKRSRDARR) is basic motif. The segment at 254-261 (LKENQITI) is leucine-zipper.

It belongs to the bZIP family. PAR subfamily. As to quaternary structure, binds DNA as a homodimer or a heterodimer. Can form a heterodimer with DBP. In terms of tissue distribution, isoform Alpha and isoform Beta are expressed at high levels in lung, bladder, kidney, gut and brain.

It is found in the nucleus. Its function is as follows. Transcription factor that binds to and transactivates the TSHB promoter. Binds to a minimal DNA-binding sequence 5'-[TC][AG][AG]TTA[TC][AG]-3'. Also activates the telokin promoter in smooth muscle-specific and calcium-dependent manner. This Mus musculus (Mouse) protein is Thyrotroph embryonic factor (Tef).